The primary structure comprises 781 residues: 5-methyltetrahydropteroyltriglutamate--homocysteine methyltransferase (781 aa).

Residues 20–23 (RELK) and lysine 131 contribute to the 5-methyltetrahydropteroyltri-L-glutamate site. Residues 453-455 (IGS) and glutamate 506 contribute to the L-homocysteine site. L-methionine-binding positions include 453 to 455 (IGS) and glutamate 506. 5-methyltetrahydropteroyltri-L-glutamate-binding positions include 537–538 (RC) and tryptophan 583. An L-homocysteine-binding site is contributed by aspartate 621. Residue aspartate 621 coordinates L-methionine. Glutamate 627 lines the 5-methyltetrahydropteroyltri-L-glutamate pocket. Positions 663, 665, and 687 each coordinate Zn(2+). Histidine 716 (proton donor) is an active-site residue. Cysteine 748 serves as a coordination point for Zn(2+).

It belongs to the vitamin-B12 independent methionine synthase family. Zn(2+) is required as a cofactor.

It catalyses the reaction 5-methyltetrahydropteroyltri-L-glutamate + L-homocysteine = tetrahydropteroyltri-L-glutamate + L-methionine. It participates in amino-acid biosynthesis; L-methionine biosynthesis via de novo pathway; L-methionine from L-homocysteine (MetE route): step 1/1. Catalyzes the transfer of a methyl group from 5-methyltetrahydrofolate to homocysteine resulting in methionine formation. The chain is 5-methyltetrahydropteroyltriglutamate--homocysteine methyltransferase from Bradyrhizobium diazoefficiens (strain JCM 10833 / BCRC 13528 / IAM 13628 / NBRC 14792 / USDA 110).